A 158-amino-acid chain; its full sequence is MRLKNRLFWIAAFIAFFLDQITKYWVVQTFSLGQTLPLLTGIFHFTYVTNTGAAFSLLSGKVEWLRWLSLGVSLVLIALALFGPTLNLWDQLGYGLILGGAMGNGIDRFVLGHVVDFLDFRLISFPVFNVADSFISIGIVFLLIASFQKTPTSTGRLD.

Transmembrane regions (helical) follow at residues Leu7–Val27, Leu38–Leu58, Leu68–Leu88, and Leu92–Gly112. Residues Asp116 and Asp132 contribute to the active site. A helical membrane pass occupies residues Phe125–Ala145.

It belongs to the peptidase A8 family.

The protein resides in the cell inner membrane. It carries out the reaction Release of signal peptides from bacterial membrane prolipoproteins. Hydrolyzes -Xaa-Yaa-Zaa-|-(S,diacylglyceryl)Cys-, in which Xaa is hydrophobic (preferably Leu), and Yaa (Ala or Ser) and Zaa (Gly or Ala) have small, neutral side chains.. It functions in the pathway protein modification; lipoprotein biosynthesis (signal peptide cleavage). Functionally, this protein specifically catalyzes the removal of signal peptides from prolipoproteins. This chain is Lipoprotein signal peptidase, found in Nostoc punctiforme (strain ATCC 29133 / PCC 73102).